The primary structure comprises 472 residues: Cannabinoid receptor 1 (472 aa).

Residues 1–116 (MKSILDGLAD…CFMILNPSQQ (116 aa)) are Extracellular-facing. The interval 2–23 (KSILDGLADTTFRTITTDLLYV) is required for mitochondrial localization. N-linked (GlcNAc...) asparagine glycosylation is found at asparagine 77 and asparagine 83. Residues 117–142 (LAIAVLSLTLGTFTVLENLLVLCVIL) traverse the membrane as a helical segment. The Cytoplasmic portion of the chain corresponds to 143-154 (HSRSLRCRPSYH). A helical membrane pass occupies residues 155–175 (FIGSLAVADLLGSVIFVYSFV). The Extracellular segment spans residues 176–187 (DFHVFHRKDSPN). The helical transmembrane segment at 188–212 (VFLFKLGGVTASFTASVGSLFLTAI) threads the bilayer. The Cytoplasmic segment spans residues 213-232 (DRYISIHRPLAYKKIVTRPK). The chain crosses the membrane as a helical span at residues 233–255 (AVVAFCLMWTIAIVIAVLPLLGW). Residues 256 to 273 (NCKKLQSVCSDIFPLIDE) are Extracellular-facing. A helical membrane pass occupies residues 274-299 (TYLMFWIGVTSVLLLFIVYAYMYILW). Residues 300–344 (KAHIHAVRMIQRGTQKSIIIHTSEDGKVQVTRPDQARMDIRLAKT) lie on the Cytoplasmic side of the membrane. Residues 345–365 (LVLILVVLIICWGPLLAIMVY) form a helical membrane-spanning segment. Topologically, residues 366-377 (DVFGKMNKLIKT) are extracellular. The chain crosses the membrane as a helical span at residues 378–399 (VFAFCSMLCLLNSTVNPIIYAL). Residues 400 to 472 (RSKDLRHAFR…VSTNTSAKAL (73 aa)) lie on the Cytoplasmic side of the membrane. A lipid anchor (S-palmitoyl cysteine) is attached at cysteine 415. Serine 425 and serine 429 each carry phosphoserine.

This sequence belongs to the G-protein coupled receptor 1 family. As to quaternary structure, interacts (via C-terminus) with CNRIP1; this interaction attenuates constitutive, but not agonist-dependent, inhibition of voltage-gated Ca(2+) channels in neurons. Associates with G protein alpha subunits, including G(i) alpha-1/GNAI1, G(i) alpha-3/GNAI3 and G(o)-alpha/GNAO1; palmitoylation is important for interaction with GNAI3 and GNAO1. Palmitoylation at Cys-415 is important for recruitment at plasma membrane and lipid rafts and association with G protein alpha subunits. As to expression, expressed in cerebral arterial muscle cells and cerebral cortex (at protein level).

It localises to the cell membrane. The protein resides in the membrane raft. Its subcellular location is the mitochondrion outer membrane. It is found in the cell projection. The protein localises to the axon. It localises to the presynapse. Hemopressin, a peptide derived from hemoglobin subunit alpha (HBA1 and/or HBA2), acts as an antagonist peptide: hemopressin-binding efficiently blocks cannabinoid receptor CNR1 and subsequent signaling. Functionally, G-protein coupled receptor for endogenous cannabinoids (eCBs), including N-arachidonoylethanolamide (also called anandamide or AEA) and 2-arachidonoylglycerol (2-AG), as well as phytocannabinoids, such as delta(9)-tetrahydrocannabinol (THC). Mediates many cannabinoid-induced effects, acting, among others, on food intake, memory loss, gastrointestinal motility, catalepsy, ambulatory activity, anxiety, chronic pain. Signaling typically involves reduction in cyclic AMP. In the hypothalamus, may have a dual effect on mitochondrial respiration depending upon the agonist dose and possibly upon the cell type. Increases respiration at low doses, while decreases respiration at high doses. At high doses, CNR1 signal transduction involves G-protein alpha-i protein activation and subsequent inhibition of mitochondrial soluble adenylate cyclase, decrease in cyclic AMP concentration, inhibition of protein kinase A (PKA)-dependent phosphorylation of specific subunits of the mitochondrial electron transport system, including NDUFS2. In the hypothalamus, inhibits leptin-induced reactive oxygen species (ROS) formation and mediates cannabinoid-induced increase in SREBF1 and FASN gene expression. In response to cannabinoids, drives the release of orexigenic beta-endorphin, not that of melanocyte-stimulating hormone alpha/alpha-MSH, from hypothalamic POMC neurons, hence promoting food intake. In the hippocampus, regulates cellular respiration and energy production in response to cannabinoids. Involved in cannabinoid-dependent depolarization-induced suppression of inhibition (DSI), a process in which depolarization of CA1 postsynaptic pyramidal neurons mobilizes eCBs, which retrogradely activate presynaptic CB1 receptors, transiently decreasing GABAergic inhibitory neurotransmission. Also reduces excitatory synaptic transmission. In superior cervical ganglions and cerebral vascular smooth muscle cells, inhibits voltage-gated Ca(2+) channels in a constitutive, as well as agonist-dependent manner. In cerebral vascular smooth muscle cells, inhibition of voltage-gated Ca(2+) channels leads to vasodilation and decrease in vascular tone. Induces leptin production in adipocytes and reduces LRP2-mediated leptin clearance in the kidney, hence participating in hyperleptinemia. In adipose tissue, CNR1 signaling leads to increased expression of SREBF1, ACACA and FASN genes. In the liver, activation by endocannabinoids leads to increased de novo lipogenesis and reduced fatty acid catabolism, associated with increased expression of SREBF1/SREBP-1, GCK, ACACA, ACACB and FASN genes. May also affect de novo cholesterol synthesis and HDL-cholesteryl ether uptake. Peripherally modulates energy metabolism. In high carbohydrate diet-induced obesity, may decrease the expression of mitochondrial dihydrolipoyl dehydrogenase/DLD in striated muscles, as well as that of selected glucose/ pyruvate metabolic enzymes, hence affecting energy expenditure through mitochondrial metabolism. In response to cannabinoid anandamide, elicits a pro-inflammatory response in macrophages, which involves NLRP3 inflammasome activation and IL1B and IL18 secretion. In macrophages infiltrating pancreatic islets, this process may participate in the progression of type-2 diabetes and associated loss of pancreatic beta-cells. This Felis catus (Cat) protein is Cannabinoid receptor 1 (CNR1).